Reading from the N-terminus, the 325-residue chain is DNA-directed RNA polymerase subunit alpha (325 aa).

Residues 1–231 (MQTSLLKPKI…DQLSVFAALE (231 aa)) are alpha N-terminal domain (alpha-NTD). Residues 246–325 (IDPILLRPVD…ENWPPAGLDK (80 aa)) are alpha C-terminal domain (alpha-CTD).

Belongs to the RNA polymerase alpha chain family. In terms of assembly, homodimer. The RNAP catalytic core consists of 2 alpha, 1 beta, 1 beta' and 1 omega subunit. When a sigma factor is associated with the core the holoenzyme is formed, which can initiate transcription.

It carries out the reaction RNA(n) + a ribonucleoside 5'-triphosphate = RNA(n+1) + diphosphate. Its function is as follows. DNA-dependent RNA polymerase catalyzes the transcription of DNA into RNA using the four ribonucleoside triphosphates as substrates. In Burkholderia mallei (strain NCTC 10247), this protein is DNA-directed RNA polymerase subunit alpha.